A 1368-amino-acid chain; its full sequence is DNA-directed RNA polymerase subunit beta (1368 aa).

The protein belongs to the RNA polymerase beta chain family. The RNAP catalytic core consists of 2 alpha, 1 beta, 1 beta' and 1 omega subunit. When a sigma factor is associated with the core the holoenzyme is formed, which can initiate transcription.

It catalyses the reaction RNA(n) + a ribonucleoside 5'-triphosphate = RNA(n+1) + diphosphate. In terms of biological role, DNA-dependent RNA polymerase catalyzes the transcription of DNA into RNA using the four ribonucleoside triphosphates as substrates. The protein is DNA-directed RNA polymerase subunit beta of Paraburkholderia phymatum (strain DSM 17167 / CIP 108236 / LMG 21445 / STM815) (Burkholderia phymatum).